The primary structure comprises 687 residues: POZ (BTB) and AT hook-containing zinc finger 1 (687 aa).

The region spanning 41 to 130 (CDVLLRVGDE…AYTSRIVVRL (90 aa)) is the BTB domain. Polar residues predominate over residues 250-260 (PFPNVASSAPP). The interval 250–279 (PFPNVASSAPPLTSKRGRGRPRKANLLDSM) is disordered. Residues 292–314 (LPCGLCGKVFTDANRLRQHEAQH) form a C2H2-type 1 zinc finger. The disordered stretch occupies residues 332-351 (GENGLPISEDPDGPRKRSRT). 5 C2H2-type zinc fingers span residues 355-377 (VACEICGKIFRDVYHLNRHKLSH), 383-405 (YSCPVCGLRFKRKDRMSYHVRSH), 413-436 (YICQSCGKGFSRPDHLNGHIKQVH), 442-464 (HKCQTCNASFATRDRLRSHLACH), and 495-517 (NFCSICNRGFSSASYLKVHVKTH). Positions 564-587 (SYGDLSDASDLKTPEKQSANGSFS) are disordered. The segment at 605 to 628 (YPCPECGSFFRSKSYLNKHIQKVH) adopts a C2H2-type 7 zinc-finger fold.

Homodimer. Interacts with RNF4. Interacts (via C-terminus) with TP53; this interaction inhibits TP53 ability to activate transcription. As to expression, widely expressed at high levels during embryogenesis, especially in the central nervous system, especially to the actively proliferating neuroblasts in the periventricular neocortical neuroepithelium, in the telencephalic cortical plate and in the hippocampus. Also expressed in a stage-specific manner in the mouse germinal epithelium. While strongly expressed during brain development,m its expression turns down in adult brain.

The protein resides in the nucleus. Transcriptional regulator that plays a role in many biological processes such as embryogenesis, senescence, T-cell development or neurogenesis. Interacts with the TP53 protein to control genes that are important in proliferation and in the DNA-damage response. Mechanistically, the interaction inhibits the DNA binding and transcriptional activity of TP53/p53. Part of the transcriptional network modulating regulatory T-cell development and controls the generation of the regulatory T-cell pool under homeostatic conditions. This chain is POZ (BTB) and AT hook-containing zinc finger 1, found in Mus musculus (Mouse).